The sequence spans 233 residues: Small ribosomal subunit protein uS3 (233 aa).

The 69-residue stretch at 39–107 (VRQYLKKELA…PAQINISEVR (69 aa)) folds into the KH type-2 domain.

The protein belongs to the universal ribosomal protein uS3 family. Part of the 30S ribosomal subunit. Forms a tight complex with proteins S10 and S14.

In terms of biological role, binds the lower part of the 30S subunit head. Binds mRNA in the 70S ribosome, positioning it for translation. In Photorhabdus laumondii subsp. laumondii (strain DSM 15139 / CIP 105565 / TT01) (Photorhabdus luminescens subsp. laumondii), this protein is Small ribosomal subunit protein uS3.